Reading from the N-terminus, the 115-residue chain is UPF0212 protein MJ0068 (115 aa).

The protein belongs to the UPF0212 family.

In Methanocaldococcus jannaschii (strain ATCC 43067 / DSM 2661 / JAL-1 / JCM 10045 / NBRC 100440) (Methanococcus jannaschii), this protein is UPF0212 protein MJ0068.